The following is a 90-amino-acid chain: UPF0184 protein (90 aa).

The stretch at 16–78 forms a coiled coil; the sequence is DETKEEMVEL…QSLETEQNTE (63 aa). Positions 57-90 are disordered; the sequence is SQQARQELQAERQSLETEQNTEPSTKSDQEQKKQ. Residues 81–90 show a composition bias toward basic and acidic residues; that stretch reads TKSDQEQKKQ.

It belongs to the UPF0184 (EST00098) family.

This chain is UPF0184 protein, found in Branchiostoma floridae (Florida lancelet).